The sequence spans 595 residues: Proline--tRNA ligase (595 aa).

Belongs to the class-II aminoacyl-tRNA synthetase family. ProS type 1 subfamily. In terms of assembly, homodimer.

The protein localises to the cytoplasm. It catalyses the reaction tRNA(Pro) + L-proline + ATP = L-prolyl-tRNA(Pro) + AMP + diphosphate. Its function is as follows. Catalyzes the attachment of proline to tRNA(Pro) in a two-step reaction: proline is first activated by ATP to form Pro-AMP and then transferred to the acceptor end of tRNA(Pro). As ProRS can inadvertently accommodate and process non-cognate amino acids such as alanine and cysteine, to avoid such errors it has two additional distinct editing activities against alanine. One activity is designated as 'pretransfer' editing and involves the tRNA(Pro)-independent hydrolysis of activated Ala-AMP. The other activity is designated 'posttransfer' editing and involves deacylation of mischarged Ala-tRNA(Pro). The misacylated Cys-tRNA(Pro) is not edited by ProRS. The chain is Proline--tRNA ligase from Treponema denticola (strain ATCC 35405 / DSM 14222 / CIP 103919 / JCM 8153 / KCTC 15104).